Consider the following 245-residue polypeptide: tRNA pseudouridine synthase A 2 (245 aa).

Residue Asp53 is the Nucleophile of the active site. A substrate-binding site is contributed by Tyr111.

Belongs to the tRNA pseudouridine synthase TruA family. Homodimer.

It carries out the reaction uridine(38/39/40) in tRNA = pseudouridine(38/39/40) in tRNA. Formation of pseudouridine at positions 38, 39 and 40 in the anticodon stem and loop of transfer RNAs. This is tRNA pseudouridine synthase A 2 from Bacillus anthracis.